The following is a 239-amino-acid chain: tRNA (guanine-N(7)-)-methyltransferase (239 aa).

Positions 69, 94, 121, and 144 each coordinate S-adenosyl-L-methionine. Asp-144 is an active-site residue. Position 148 (Lys-148) interacts with substrate. Residues 150–155 (RHNKRR) are interaction with RNA. Residues Asp-180 and 217–220 (TKFE) each bind substrate.

This sequence belongs to the class I-like SAM-binding methyltransferase superfamily. TrmB family. In terms of assembly, monomer.

It carries out the reaction guanosine(46) in tRNA + S-adenosyl-L-methionine = N(7)-methylguanosine(46) in tRNA + S-adenosyl-L-homocysteine. It functions in the pathway tRNA modification; N(7)-methylguanine-tRNA biosynthesis. Functionally, catalyzes the formation of N(7)-methylguanine at position 46 (m7G46) in tRNA. The polypeptide is tRNA (guanine-N(7)-)-methyltransferase (Klebsiella pneumoniae subsp. pneumoniae (strain ATCC 700721 / MGH 78578)).